We begin with the raw amino-acid sequence, 191 residues long: Dephospho-CoA kinase (191 aa).

A DPCK domain is found at 3–191 (AIGITGSYAS…NLIANLECRV (189 aa)). 11–16 (ASGKTF) serves as a coordination point for ATP.

This sequence belongs to the CoaE family.

The protein resides in the cytoplasm. It catalyses the reaction 3'-dephospho-CoA + ATP = ADP + CoA + H(+). It participates in cofactor biosynthesis; coenzyme A biosynthesis; CoA from (R)-pantothenate: step 5/5. Its function is as follows. Catalyzes the phosphorylation of the 3'-hydroxyl group of dephosphocoenzyme A to form coenzyme A. In Rickettsia bellii (strain RML369-C), this protein is Dephospho-CoA kinase.